The following is a 338-amino-acid chain: Palmitoyltransferase ZDHHC15 (338 aa).

The Cytoplasmic portion of the chain corresponds to 1–20; sequence MLAGCRVALPRGLRCCQRVL. A helical transmembrane segment spans residues 21-41; sequence SWVPVVIISLVVLWSYYAYVW. At 42–56 the chain is on the lumenal side; it reads ELCLVTVTNPAEKAA. A helical membrane pass occupies residues 57–77; that stretch reads YLLIFHTVFLLFIWTYWKAIF. Over 78 to 172 the chain is Cytoplasmic; the sequence is TPPKQPTKKF…NNCIGYSNYK (95 aa). Positions 129–179 constitute a DHHC domain; it reads RFCDTCQMVKPDRCHHCSVCGMCVLKMDHHCPWVNNCIGYSNYKFFLLFLA. Cys-131, Cys-134, His-144, Cys-145, Cys-148, Cys-151, and His-158 together coordinate Zn(2+). Catalysis depends on Cys-159, which acts as the S-palmitoyl cysteine intermediate. Zn(2+) is bound at residue Cys-165. The helical transmembrane segment at 173 to 193 threads the bilayer; sequence FFLLFLAYAMLYCLYIGCTVF. At 194–210 the chain is on the lumenal side; that stretch reads QYFILYWTDTLSNGRAK. The chain crosses the membrane as a helical span at residues 211 to 234; sequence FHVLFLLFVALMFFISLMFLFGYH. The Cytoplasmic portion of the chain corresponds to 235–338; it reads CWLVSLNRTT…TSHITVHIEK (104 aa).

This sequence belongs to the DHHC palmitoyltransferase family. Autopalmitoylated (in vitro).

It is found in the golgi apparatus membrane. Its subcellular location is the postsynaptic density. The enzyme catalyses L-cysteinyl-[protein] + hexadecanoyl-CoA = S-hexadecanoyl-L-cysteinyl-[protein] + CoA. The catalysed reaction is L-cysteinyl-[protein] + tetradecanoyl-CoA = S-tetradecanoyl-L-cysteinyl-[protein] + CoA. It catalyses the reaction L-cysteinyl-[protein] + octadecanoyl-CoA = S-octadecanoyl-L-cysteinyl-[protein] + CoA. Its function is as follows. Palmitoyltransferase that catalyzes the addition of palmitate onto various protein substrates. Has no stringent fatty acid selectivity and in addition to palmitate can also transfer onto target proteins myristate from tetradecanoyl-CoA and stearate from octadecanoyl-CoA. May thereby regulate target proteins association and localization to membranes. In the nervous system, probably catalyzes the palmitoylation of synaptic proteins and is involved in the differentiation of dopaminergic neurons and the development of the diencephalon. The chain is Palmitoyltransferase ZDHHC15 (zdhhc15) from Xenopus laevis (African clawed frog).